We begin with the raw amino-acid sequence, 917 residues long: Hexokinase-1 (917 aa).

Residue Met1 is modified to N-acetylmethionine. A mitochondrial-binding peptide (MBP) region spans residues 1 to 10 (MIAAQLLAYY). Hexokinase domains are found at residues 16–458 (DDQV…MVTA) and 464–906 (AEQH…LITA). Residues Arg30 and 84-89 (DLGGSS) each bind ATP. The hexokinase small subdomain 1 stretch occupies residues 73–207 (DGSEKGDFIA…DYDANIVAVV (135 aa)). 84 to 91 (DLGGSSFR) provides a ligand contact to D-glucose 6-phosphate. D-glucose contacts are provided by residues Ser155, 172-173 (TK), and 208-209 (ND). Residues 208–447 (NDTVGTMMTC…SDVRFLLSES (240 aa)) form a hexokinase large subdomain 1 region. Asp209 and Thr232 together coordinate D-glucose 6-phosphate. Residues Asn235, Glu260, and 291–294 (QLFE) each bind D-glucose. Ser337 carries the post-translational modification Phosphoserine. Asn345 is an ATP binding site. 413 to 415 (DGS) lines the D-glucose 6-phosphate pocket. 425–426 (RR) lines the ATP pocket. D-glucose 6-phosphate is bound by residues Ser449 and 532–536 (DLGGT). Residues 521–655 (DGTENGDFLA…EFDLDVVAVV (135 aa)) are hexokinase small subdomain 2. 532-537 (DLGGTN) provides a ligand contact to ATP. D-glucose is bound by residues 603 to 604 (SF), 620 to 621 (TK), and 656 to 657 (ND). The hexokinase large subdomain 2 stretch occupies residues 656 to 895 (NDTVGTMMTC…CNVSFLLSED (240 aa)). Residues Asp657 and Thr680 each contribute to the D-glucose 6-phosphate site. Thr680 is an ATP binding site. Residues 682-683 (SN), Glu708, and Glu742 contribute to the D-glucose site. Residues 747 to 748 (GM), 784 to 788 (TKFLS), and 863 to 867 (TLYKL) each bind ATP. Residues 861–863 (DGT) and Ser897 contribute to the D-glucose 6-phosphate site.

Belongs to the hexokinase family. In terms of assembly, monomer. Interacts with RABL2/RABL2A; binds preferentially to GTP-bound RABL2. Interacts with VDAC1. The HK1-VDAC1 complex interacts with ATF2. Interacts (via N-terminal spermatogenic cell-specific region) with PFKM (via C-terminus). Interacts with SMAD5.

Its subcellular location is the mitochondrion outer membrane. It is found in the cytoplasm. It localises to the cytosol. The enzyme catalyses a D-hexose + ATP = a D-hexose 6-phosphate + ADP + H(+). The catalysed reaction is D-fructose + ATP = D-fructose 6-phosphate + ADP + H(+). It carries out the reaction D-glucose + ATP = D-glucose 6-phosphate + ADP + H(+). It catalyses the reaction D-mannose + ATP = D-mannose 6-phosphate + ADP + H(+). The enzyme catalyses D-glucosamine + ATP = D-glucosamine 6-phosphate + ADP + H(+). It functions in the pathway carbohydrate metabolism; hexose metabolism. Its pathway is carbohydrate degradation; glycolysis; D-glyceraldehyde 3-phosphate and glycerone phosphate from D-glucose: step 1/4. With respect to regulation, hexokinase is an allosteric enzyme inhibited by its product D-glucose 6-phosphate. Hexokinase activity is inhibited by N-acetyl-D-glucosamine. In terms of biological role, catalyzes the phosphorylation of various hexoses, such as D-glucose, D-glucosamine, D-fructose, D-mannose and 2-deoxy-D-glucose, to hexose 6-phosphate (D-glucose 6-phosphate, D-glucosamine 6-phosphate, D-fructose 6-phosphate, D-mannose 6-phosphate and 2-deoxy-D-glucose 6-phosphate, respectively). Does not phosphorylate N-acetyl-D-glucosamine. Mediates the initial step of glycolysis by catalyzing phosphorylation of D-glucose to D-glucose 6-phosphate. Involved in innate immunity and inflammation by acting as a pattern recognition receptor for bacterial peptidoglycan. When released in the cytosol, N-acetyl-D-glucosamine component of bacterial peptidoglycan inhibits the hexokinase activity of HK1 and causes its dissociation from mitochondrial outer membrane, thereby activating the NLRP3 inflammasome. This chain is Hexokinase-1, found in Pongo abelii (Sumatran orangutan).